Reading from the N-terminus, the 301-residue chain is Sulfate adenylyltransferase subunit 2 (301 aa).

The segment at 279–301 is disordered; it reads RQGRLIDRDEAGSMEKKKREGYF.

This sequence belongs to the PAPS reductase family. CysD subfamily. As to quaternary structure, heterodimer composed of CysD, the smaller subunit, and CysN.

The enzyme catalyses sulfate + ATP + H(+) = adenosine 5'-phosphosulfate + diphosphate. It participates in sulfur metabolism; hydrogen sulfide biosynthesis; sulfite from sulfate: step 1/3. With CysN forms the ATP sulfurylase (ATPS) that catalyzes the adenylation of sulfate producing adenosine 5'-phosphosulfate (APS) and diphosphate, the first enzymatic step in sulfur assimilation pathway. APS synthesis involves the formation of a high-energy phosphoric-sulfuric acid anhydride bond driven by GTP hydrolysis by CysN coupled to ATP hydrolysis by CysD. The sequence is that of Sulfate adenylyltransferase subunit 2 from Mesorhizobium japonicum (strain LMG 29417 / CECT 9101 / MAFF 303099) (Mesorhizobium loti (strain MAFF 303099)).